Reading from the N-terminus, the 132-residue chain is ATP synthase epsilon chain (132 aa).

Belongs to the ATPase epsilon chain family. F-type ATPases have 2 components, CF(1) - the catalytic core - and CF(0) - the membrane proton channel. CF(1) has five subunits: alpha(3), beta(3), gamma(1), delta(1), epsilon(1). CF(0) has three main subunits: a, b and c.

The protein resides in the cell inner membrane. Produces ATP from ADP in the presence of a proton gradient across the membrane. The polypeptide is ATP synthase epsilon chain (Anaeromyxobacter dehalogenans (strain 2CP-1 / ATCC BAA-258)).